Here is a 466-residue protein sequence, read N- to C-terminus: Soluble pyridine nucleotide transhydrogenase (466 aa).

36 to 45 lines the FAD pocket; the sequence is ERYQNVGGGC.

Belongs to the class-I pyridine nucleotide-disulfide oxidoreductase family. Homooligomer; probable homooctamer. FAD serves as cofactor.

Its subcellular location is the cytoplasm. It carries out the reaction NAD(+) + NADPH = NADH + NADP(+). Its function is as follows. Conversion of NADPH, generated by peripheral catabolic pathways, to NADH, which can enter the respiratory chain for energy generation. The chain is Soluble pyridine nucleotide transhydrogenase from Escherichia coli O157:H7.